A 341-amino-acid chain; its full sequence is tRNA N6-adenosine threonylcarbamoyltransferase (341 aa).

Fe cation contacts are provided by His111 and His115. Residues 134–138 (LVSGG), Asp167, Gly180, and Asn272 each bind substrate. Residue Asp300 coordinates Fe cation.

It belongs to the KAE1 / TsaD family. Requires Fe(2+) as cofactor.

It is found in the cytoplasm. It catalyses the reaction L-threonylcarbamoyladenylate + adenosine(37) in tRNA = N(6)-L-threonylcarbamoyladenosine(37) in tRNA + AMP + H(+). In terms of biological role, required for the formation of a threonylcarbamoyl group on adenosine at position 37 (t(6)A37) in tRNAs that read codons beginning with adenine. Is involved in the transfer of the threonylcarbamoyl moiety of threonylcarbamoyl-AMP (TC-AMP) to the N6 group of A37, together with TsaE and TsaB. TsaD likely plays a direct catalytic role in this reaction. This Edwardsiella ictaluri (strain 93-146) protein is tRNA N6-adenosine threonylcarbamoyltransferase.